The sequence spans 90 residues: DNA-binding protein HU-beta (90 aa).

The protein belongs to the bacterial histone-like protein family. Heterodimer of an alpha and a beta chain.

Functionally, histone-like DNA-binding protein which is capable of wrapping DNA to stabilize it, and thus to prevent its denaturation under extreme environmental conditions. This is DNA-binding protein HU-beta (hupB) from Escherichia coli O6:H1 (strain CFT073 / ATCC 700928 / UPEC).